The sequence spans 387 residues: Exodeoxyribonuclease 7 large subunit (387 aa).

Belongs to the XseA family. In terms of assembly, heterooligomer composed of large and small subunits.

Its subcellular location is the cytoplasm. It catalyses the reaction Exonucleolytic cleavage in either 5'- to 3'- or 3'- to 5'-direction to yield nucleoside 5'-phosphates.. Bidirectionally degrades single-stranded DNA into large acid-insoluble oligonucleotides, which are then degraded further into small acid-soluble oligonucleotides. The polypeptide is Exodeoxyribonuclease 7 large subunit (Campylobacter jejuni subsp. jejuni serotype O:2 (strain ATCC 700819 / NCTC 11168)).